The following is a 349-amino-acid chain: MSKETLVLLYGGRSAERDVSVLSAESVMRAINYDNFLVKTYFITQAGDFIKTQEFDSQPSETDKLMTNDTIIASQKIKPSDIYEEEAVVFPVLHGPMGEDGSIQGFLEVLKMPYVGTNILSSSVAMDKITTNQVLESATTIPQVAYVALIEGEPLESKLAEVEEKLIYPVFVKPANMGSSVGISKAENRTDLKQAIALALKYDSRVLIEQGVDAREIEVGILGNTDVKTTLPGEIVKDVAFYDYEAKYIDNKITMAIPAEIDPVIVEKMRDYAATAFRTLGCCGLSRCDFFLTEDGKVYLNELNTMPGFTQWSMYPLLWENMGLSYSVLIEELVSLAKEMFDKRESHLV.

Residues 133-335 enclose the ATP-grasp domain; it reads QVLESATTIP…YSVLIEELVS (203 aa). Residue 163–218 coordinates ATP; sequence EEKLIYPVFVKPANMGSSVGISKAENRTDLKQAIALALKYDSRVLIEQGVDAREIE. Mg(2+) is bound by residues aspartate 289, glutamate 302, and asparagine 304.

This sequence belongs to the D-alanine--D-alanine ligase family. The cofactor is Mg(2+). Mn(2+) serves as cofactor.

It is found in the cytoplasm. The catalysed reaction is 2 D-alanine + ATP = D-alanyl-D-alanine + ADP + phosphate + H(+). It participates in cell wall biogenesis; peptidoglycan biosynthesis. Cell wall formation. The chain is D-alanine--D-alanine ligase from Streptococcus mutans serotype c (strain ATCC 700610 / UA159).